A 3343-amino-acid chain; its full sequence is Breast cancer type 2 susceptibility protein homolog (3343 aa).

The segment at 1–40 is interaction with PALB2; sequence MTVEYKRRPTFWEIFKARCSTADLGPISLNWFEELFSEAP. Positions 40–60 are disordered; the sequence is PPYNTEHPEESEYKPQGHEPQ. Positions 45–56 are enriched in basic and acidic residues; that stretch reads EHPEESEYKPQG. Ser-70 carries the post-translational modification Phosphoserine. Residues 348–381 form a disordered region; it reads IEPRDSEPLDPSVTNQKPLYSQSGDISSEAGQCS. The span at 359-381 shows a compositional bias: polar residues; it reads SVTNQKPLYSQSGDISSEAGQCS. A phosphoserine mark is found at Ser-475 and Ser-736. Positions 622 to 982 are interaction with NPM1; sequence PDSSIKRSNL…DKWSEFLDPL (361 aa). BRCA2 repeat units follow at residues 984–1018, 1197–1231, 1405–1439, 1503–1537, 1645–1669, 1828–1845, 1939–1973, and 2019–2053; these read NHKLGGSFRTASNKEIKLSEDNVKKSKMFFKDIEE, KEMEFGGFCSALGTKLSVSNEALRKAMKLFSDIEN, MKEFNISFQTASGKNIRVSKESLNKSVNILDQETE, KEPTLLSFHTASGKKVKIMQESLDKVKNLFDETQY, CYTGDSRKTCVGESSLSKGKKWLRE, FITTHSQETVRMKEIFTD, PSRTYGFFSTASGKAVQVSDASLEKARQVFSEIDG, and SSFVFSGFSTAGGKLVTVSESALHKVKGMLEEFDL. The segment at 985–2050 is interaction with RAD51; sequence HKLGGSFRTA…LHKVKGMLEE (1066 aa). Disordered stretches follow at residues 2059-2138, 2297-2356, and 2377-2407; these read TLQH…VLGT, PFCS…SDKS, and DSKNVNLEGKNQKSADGVSEDGNDSDFPQFN. Ser-2063 carries the phosphoserine modification. 2 stretches are compositionally biased toward polar residues: residues 2083 to 2094 and 2101 to 2125; these read PEYSVSSKLQKT and SPSNYKESGSSGNTQSLEVSPQLSQ. The segment at 2233–2300 is interaction with HSF2BP; it reads RKRGGMAGVA…EPVTCGPFCS (68 aa). 2 stretches are compositionally biased toward polar residues: residues 2307–2320 and 2332–2342; these read TQSPHVTSPAQGLQ and GKSSSNPTVSA. Residues 2313–2475 form an interaction with FANCD2 region; sequence TSPAQGLQSK…SPKQLYMYGV (163 aa). Residues 2344 to 2356 show a composition bias toward basic and acidic residues; sequence RSERTRHSVSDKS. An interaction with SEM1 region spans residues 2411–2762; sequence MSSLQNARDL…QRVYPLQWVE (352 aa). The short motif at 2612–2628 is the Nuclear export signal; masked by interaction with SEM1 element; the sequence is AAKTLVLCVSDIISLST. Residues 3114–3163 are disordered; the sequence is DSPKWSTPNKDPTREPYPASTCSASDLASGGQLPRSSPTDQQSYRSPLSC. The segment covering 3147–3163 has biased composition (polar residues); sequence PRSSPTDQQSYRSPLSC. Ser-3222 carries the phosphoserine; by CDK1 and CDK2 modification. Disordered regions lie at residues 3231 to 3255 and 3289 to 3343; these read PPRSCGTKYPTPLKKEGPSSPWSRA and VGGS…PDYS. Phosphoserine is present on Ser-3250. Residues 3295-3310 show a composition bias toward polar residues; the sequence is VFPSDSTRTEGPSAST. The segment covering 3318-3334 has biased composition (basic and acidic residues); sequence SKRESLRDCRDDSDGKL.

Monomer and dimer. Interacts with RAD51; regulates RAD51 recruitment and function at sites of DNA repair. Interacts with SEM1, WDR16, USP11, DMC1, ROCK2 and NPM1. Interacts with both nonubiquitinated and monoubiquitinated FANCD2; this complex also includes XRCC3 and phosphorylated FANCG. Part of a BRCA complex containing BRCA1, BRCA2 and PALB2. Component of the homologous recombination repair (HR) complex composed of ERCC5/XPG, BRCA2, PALB2, DSS1 and RAD51. Within the complex, interacts with ERCC5/XPG and PALB2. Interacts directly with PALB2 which may serve as a scaffold for a HR complex containing PALB2, BRCA2, RAD51C, RAD51 and XRCC3. Interacts with BRCA1 only in the presence of PALB2 which serves as the bridging protein. Interacts with POLH; the interaction is direct. Interacts with the TREX-2 complex subunits PCID2 and SEM1. Interacts with HSF2BP and BRME1; the interaction with HSF2BP is direct and allows the formation of a ternary complex. The complex BRME1:HSF2BP:BRCA2 interacts with SPATA22, MEIOB and RAD51. In terms of processing, phosphorylated by ATM upon irradiation-induced DNA damage. Phosphorylation by CHEK1 and CHEK2 regulates interaction with RAD51. Phosphorylation at Ser-3222 by CDK1 and CDK2 is low in S phase when recombination is active, but increases as cells progress towards mitosis; this phosphorylation prevents homologous recombination-dependent repair during S phase and G2 by inhibiting RAD51 binding. Ubiquitinated in the absence of DNA damage; this does not lead to proteasomal degradation. In contrast, ubiquitination in response to DNA damage leads to proteasomal degradation. As to expression, highest expression in testis. Also expressed in spleen, skeletal muscle, thymus, mammary gland, heart, ovary, prostate, liver, lung, kidney and brain.

The protein localises to the nucleus. It is found in the cytoplasm. It localises to the cytoskeleton. The protein resides in the microtubule organizing center. Its subcellular location is the centrosome. Functionally, involved in double-strand break repair and/or homologous recombination. Binds RAD51 and potentiates recombinational DNA repair by promoting assembly of RAD51 onto single-stranded DNA (ssDNA). Acts by targeting RAD51 to ssDNA over double-stranded DNA, enabling RAD51 to displace replication protein-A (RPA) from ssDNA and stabilizing RAD51-ssDNA filaments by blocking ATP hydrolysis. Part of a PALB2-scaffolded HR complex containing RAD51C and which is thought to play a role in DNA repair by HR. May participate in S phase checkpoint activation. Binds selectively to ssDNA, and to ssDNA in tailed duplexes and replication fork structures. May play a role in the extension step after strand invasion at replication-dependent DNA double-strand breaks; together with PALB2 is involved in both POLH localization at collapsed replication forks and DNA polymerization activity. In concert with NPM1, regulates centrosome duplication. Interacts with the TREX-2 complex (transcription and export complex 2) subunits PCID2 and SEM1, and is required to prevent R-loop-associated DNA damage and thus transcription-associated genomic instability, independently of its known role in homologous recombination. This is Breast cancer type 2 susceptibility protein homolog from Rattus norvegicus (Rat).